A 606-amino-acid chain; its full sequence is 1-deoxy-D-xylulose-5-phosphate synthase (606 aa).

Thiamine diphosphate-binding positions include His-63 and 104–106 (GHS). Asp-137 contacts Mg(2+). Residues 138 to 139 (GS), Asn-166, Tyr-273, and Glu-354 contribute to the thiamine diphosphate site. Asn-166 contacts Mg(2+).

This sequence belongs to the transketolase family. DXPS subfamily. As to quaternary structure, homodimer. It depends on Mg(2+) as a cofactor. The cofactor is thiamine diphosphate.

The catalysed reaction is D-glyceraldehyde 3-phosphate + pyruvate + H(+) = 1-deoxy-D-xylulose 5-phosphate + CO2. The protein operates within metabolic intermediate biosynthesis; 1-deoxy-D-xylulose 5-phosphate biosynthesis; 1-deoxy-D-xylulose 5-phosphate from D-glyceraldehyde 3-phosphate and pyruvate: step 1/1. Functionally, catalyzes the acyloin condensation reaction between C atoms 2 and 3 of pyruvate and glyceraldehyde 3-phosphate to yield 1-deoxy-D-xylulose-5-phosphate (DXP). This is 1-deoxy-D-xylulose-5-phosphate synthase from Sulfurimonas denitrificans (strain ATCC 33889 / DSM 1251) (Thiomicrospira denitrificans (strain ATCC 33889 / DSM 1251)).